The following is a 225-amino-acid chain: UPF0758 protein MADE_1000235 (225 aa).

The MPN domain occupies 102 to 224 (VFNNVDDTKR…TISFAQRGLL (123 aa)). Zn(2+)-binding residues include His173, His175, and Asp186. The JAMM motif motif lies at 173–186 (HNHPSGVAEPSHAD).

Belongs to the UPF0758 family.

The protein is UPF0758 protein MADE_1000235 of Alteromonas mediterranea (strain DSM 17117 / CIP 110805 / LMG 28347 / Deep ecotype).